The following is a 244-amino-acid chain: Transcriptional activator protein FnrA (244 aa).

Residues 159-232 (KTADERIATF…GKEVRILDSI (74 aa)) form the HTH crp-type domain. The segment at residues 192-211 (RNEIGNYLGLAVETVSRVFT) is a DNA-binding region (H-T-H motif).

Transcriptional regulator of arginine deiminase. The protein is Transcriptional activator protein FnrA (fnrA) of Stutzerimonas stutzeri (Pseudomonas stutzeri).